A 408-amino-acid chain; its full sequence is Na(+)/H(+) antiporter NhaA (408 aa).

Transmembrane regions (helical) follow at residues 42-62 (LMFV…PVYF), 69-89 (VLGL…FFLL), 110-130 (ALPG…FIAV), 140-160 (GWAI…SLLG), 169-189 (IFLT…IALF), 192-212 (AELT…LAAL), 215-235 (FGVK…FFVL), 238-258 (GIHA…QAST), 277-297 (VAFL…FAGL), 312-332 (LGLF…AIWL), 346-366 (LYGV…IGLL), and 380-400 (IGVL…LRVT).

The protein belongs to the NhaA Na(+)/H(+) (TC 2.A.33) antiporter family.

It localises to the cell inner membrane. The catalysed reaction is Na(+)(in) + 2 H(+)(out) = Na(+)(out) + 2 H(+)(in). Na(+)/H(+) antiporter that extrudes sodium in exchange for external protons. The sequence is that of Na(+)/H(+) antiporter NhaA from Nitrobacter hamburgensis (strain DSM 10229 / NCIMB 13809 / X14).